The chain runs to 306 residues: Probable dimethyladenosine transferase (306 aa).

S-adenosyl-L-methionine-binding residues include His30, Leu32, Gly57, Glu78, Asp106, and Asn121.

It belongs to the class I-like SAM-binding methyltransferase superfamily. rRNA adenine N(6)-methyltransferase family. In terms of assembly, part of the small subunit (SSU) processome, composed of more than 70 proteins and the RNA chaperone small nucleolar RNA (snoRNA) U3.

It is found in the nucleus. The protein localises to the nucleolus. It carries out the reaction adenosine(1779)/adenosine(1780) in 18S rRNA + 4 S-adenosyl-L-methionine = N(6)-dimethyladenosine(1779)/N(6)-dimethyladenosine(1780) in 18S rRNA + 4 S-adenosyl-L-homocysteine + 4 H(+). In terms of biological role, specifically dimethylates two adjacent adenosines in the loop of a conserved hairpin near the 3'-end of 18S rRNA in the 40S particle. Involved in the pre-rRNA processing steps leading to small-subunit rRNA production independently of its RNA-modifying catalytic activity. Part of the small subunit (SSU) processome, first precursor of the small eukaryotic ribosomal subunit. During the assembly of the SSU processome in the nucleolus, many ribosome biogenesis factors, an RNA chaperone and ribosomal proteins associate with the nascent pre-rRNA and work in concert to generate RNA folding, modifications, rearrangements and cleavage as well as targeted degradation of pre-ribosomal RNA by the RNA exosome. The protein is Probable dimethyladenosine transferase of Drosophila melanogaster (Fruit fly).